The sequence spans 246 residues: DNA repair protein RecO (246 aa).

This sequence belongs to the RecO family.

In terms of biological role, involved in DNA repair and RecF pathway recombination. This is DNA repair protein RecO from Methylorubrum populi (strain ATCC BAA-705 / NCIMB 13946 / BJ001) (Methylobacterium populi).